The chain runs to 425 residues: tRNA(Ile)-lysidine synthase (425 aa).

27–32 provides a ligand contact to ATP; sequence SGGLDS.

The protein belongs to the tRNA(Ile)-lysidine synthase family.

The protein resides in the cytoplasm. It carries out the reaction cytidine(34) in tRNA(Ile2) + L-lysine + ATP = lysidine(34) in tRNA(Ile2) + AMP + diphosphate + H(+). In terms of biological role, ligates lysine onto the cytidine present at position 34 of the AUA codon-specific tRNA(Ile) that contains the anticodon CAU, in an ATP-dependent manner. Cytidine is converted to lysidine, thus changing the amino acid specificity of the tRNA from methionine to isoleucine. The sequence is that of tRNA(Ile)-lysidine synthase from Streptococcus pneumoniae (strain Hungary19A-6).